The primary structure comprises 23 residues: Defensin D4 (23 aa).

The protein belongs to the DEFL family. Group IV subfamily. As to expression, distributed in the epidermal cell layer of leaves and in the subepidermal layer region of stems. Not in roots.

The protein resides in the secreted. Its subcellular location is the cell wall. In terms of biological role, antimicrobial peptide. Active against Fusarium spp., Gram-positive and Gram-negative bacterial pathogens. This chain is Defensin D4, found in Spinacia oleracea (Spinach).